A 277-amino-acid chain; its full sequence is (-)-trans-carveol dehydrogenase (277 aa).

Position 10 to 32 (L10 to D32) interacts with NAD(+). Substrate is bound at residue S156. Y169 (proton acceptor) is an active-site residue.

Belongs to the short-chain dehydrogenases/reductases (SDR) family. Homotetramer.

The enzyme catalyses (1S,5R)-carveol + NAD(+) = (R)-carvone + NADH + H(+). It carries out the reaction (1S,5S)-carveol + NAD(+) = (S)-carvone + NADH + H(+). It participates in terpene metabolism; limonene degradation. With respect to regulation, competitively inhibited by the product (S)- or (R)-carvone. Functionally, catalyzes the oxidation of carveol to carvone, with a strong stereoselectivity since it efficiently converts only the (6S)-stereoisomers, of which (-)-(4R,6S)-trans-carveol is the better substrate. Displays a broad substrate specificity with a preference for substituted cyclohexanols, and does not catalyze the oxidation of primary or short chain aliphatic secondary alcohols. Is also able, albeit more slowly, to oxidize limonene-1,2-diol into 1-hydroxy-2-oxolimonene. In Rhodococcus erythropolis (Arthrobacter picolinophilus), this protein is (-)-trans-carveol dehydrogenase (limC).